Reading from the N-terminus, the 351-residue chain is DNA polymerase IV (351 aa).

The UmuC domain occupies 4-185; that stretch reads IIHVDMDCFF…LPLAKIPGVG (182 aa). Asp8 and Asp103 together coordinate Mg(2+). The active site involves Glu104.

It belongs to the DNA polymerase type-Y family. As to quaternary structure, monomer. Mg(2+) is required as a cofactor.

Its subcellular location is the cytoplasm. The catalysed reaction is DNA(n) + a 2'-deoxyribonucleoside 5'-triphosphate = DNA(n+1) + diphosphate. Poorly processive, error-prone DNA polymerase involved in untargeted mutagenesis. Copies undamaged DNA at stalled replication forks, which arise in vivo from mismatched or misaligned primer ends. These misaligned primers can be extended by PolIV. Exhibits no 3'-5' exonuclease (proofreading) activity. May be involved in translesional synthesis, in conjunction with the beta clamp from PolIII. The chain is DNA polymerase IV from Escherichia coli O139:H28 (strain E24377A / ETEC).